Here is a 1031-residue protein sequence, read N- to C-terminus: Serine-repeat antigen protein 6 (1031 aa).

The signal sequence occupies residues 1–24; sequence MICPIFFLYIINVLFTQYFIKCEG. N-linked (GlcNAc...) asparagine glycosylation is present at Asn74. The segment covering 91–101 has biased composition (low complexity); the sequence is KVVSSSESGKG. Residues 91 to 163 are disordered; the sequence is KVVSSSESGK…TESSSETLNK (73 aa). Over residues 104–139 the composition is skewed to polar residues; that stretch reads VSHTKVTSEGLSDTQPNVTQSVSSSTHTPGSLDSTM. The N-linked (GlcNAc...) asparagine glycan is linked to Asn120. Positions 140–158 are enriched in low complexity; that stretch reads STEQHSSVSQSSLPTESSS. Residue Asn449 is glycosylated (N-linked (GlcNAc...) asparagine). The interval 490-567 is disordered; that stretch reads TLPSESPSES…GDTNYVYDFD (78 aa). Residues 492–505 show a composition bias toward low complexity; sequence PSESPSESSSKSDS. Residues 511–535 are compositionally biased toward basic and acidic residues; sequence NDKDKNEDKDDMSKNSKEEFKNDDK. N-linked (GlcNAc...) asparagine glycosylation is present at Asn544. Positions 554–564 are enriched in low complexity; the sequence is NINNGDTNYVY. N-linked (GlcNAc...) asparagine glycosylation occurs at Asn573. Residue Cys644 is part of the active site. An N-linked (GlcNAc...) asparagine glycan is attached at Asn674. Active-site residues include His810 and Asn835. Residues Asn929 and Asn974 are each glycosylated (N-linked (GlcNAc...) asparagine).

Belongs to the peptidase C1 family. Just prior to merozoite egress from host erythrocytes, proteolytically cleaved by SUB1 to generate the active 75kDa form.

It is found in the parasitophorous vacuole lumen. The protein localises to the parasitophorous vacuole membrane. In terms of biological role, cysteine protease which plays an essential role in merozoite egress from host erythrocytes. May cleave host SPTB/beta spectrin and ANK1/ankyrin-1 which disrupts host erythrocyte actin cytoskeleton and leads to host erythrocyte cell membrane rupture. In Plasmodium falciparum (isolate 3D7), this protein is Serine-repeat antigen protein 6.